Here is a 178-residue protein sequence, read N- to C-terminus: Large ribosomal subunit protein bL25 (178 aa).

The protein belongs to the bacterial ribosomal protein bL25 family. CTC subfamily. In terms of assembly, part of the 50S ribosomal subunit; part of the 5S rRNA/L5/L18/L25 subcomplex. Contacts the 5S rRNA. Binds to the 5S rRNA independently of L5 and L18.

Functionally, this is one of the proteins that binds to the 5S RNA in the ribosome where it forms part of the central protuberance. The sequence is that of Large ribosomal subunit protein bL25 from Helicobacter pylori (strain G27).